Here is a 296-residue protein sequence, read N- to C-terminus: Phosphate transport system permease protein PstA (296 aa).

The Cytoplasmic portion of the chain corresponds to 1–28; it reads MAMVEMQTTAALAESRRKMQARRRLKNR. A helical membrane pass occupies residues 29 to 50; that stretch reads IALTLSMATMAFGLFWLIWILM. The Periplasmic portion of the chain corresponds to 51-82; the sequence is STITRGIDGMSLALFTEMTPPPNTEGGGLANA. The helical transmembrane segment at 83–102 threads the bilayer; the sequence is LAGSGLLILWATVFGTPLGI. One can recognise an ABC transmembrane type-1 domain in the interval 83–286; it reads LAGSGLLILW…LCVLLLNILA (204 aa). Over 103 to 126 the chain is Cytoplasmic; sequence MAGIYLAEYGRKSWLAEVIRFIND. The chain crosses the membrane as a helical span at residues 127–146; that stretch reads ILLSAPSIVVGLFVYTIVVA. The Periplasmic segment spans residues 147-150; the sequence is QMEH. Residues 151 to 169 traverse the membrane as a helical segment; it reads FSGWAGVIALALLQVPIVI. The Cytoplasmic portion of the chain corresponds to 170-204; the sequence is RTTENMLKLVPYSLREAAYALGTPKWKMISAITLK. Residues 205 to 223 traverse the membrane as a helical segment; it reads ASVSGIMTGILLAIARIAG. Residues 224–266 are Periplasmic-facing; that stretch reads ETAPLLFTALSNQFWSTDMMQPIANLPVTIFKFAMSPFAEWQQ. A helical transmembrane segment spans residues 267-286; it reads LAWAGVLIITLCVLLLNILA. Over 287–296 the chain is Cytoplasmic; sequence RVVFAKNKHG.

Belongs to the binding-protein-dependent transport system permease family. CysTW subfamily.

It is found in the cell inner membrane. Functionally, part of the binding-protein-dependent transport system for phosphate; probably responsible for the translocation of the substrate across the membrane. This is Phosphate transport system permease protein PstA (pstA) from Escherichia coli (strain K12).